The chain runs to 302 residues: 4-diphosphocytidyl-2-C-methyl-D-erythritol kinase (302 aa).

The active site involves Lys-11. 93–103 (PVASGLAGGST) serves as a coordination point for ATP. The active site involves Asp-135.

Belongs to the GHMP kinase family. IspE subfamily.

It carries out the reaction 4-CDP-2-C-methyl-D-erythritol + ATP = 4-CDP-2-C-methyl-D-erythritol 2-phosphate + ADP + H(+). It participates in isoprenoid biosynthesis; isopentenyl diphosphate biosynthesis via DXP pathway; isopentenyl diphosphate from 1-deoxy-D-xylulose 5-phosphate: step 3/6. Its function is as follows. Catalyzes the phosphorylation of the position 2 hydroxy group of 4-diphosphocytidyl-2C-methyl-D-erythritol. The polypeptide is 4-diphosphocytidyl-2-C-methyl-D-erythritol kinase (Gloeobacter violaceus (strain ATCC 29082 / PCC 7421)).